Here is a 432-residue protein sequence, read N- to C-terminus: MFHLKEQQTSIKQEIIAGLTTFFTMVYIVVVNPVILANAGVPFDQVFTATIIASIVGTLWMALAANYPIAIAPGMGLNAYLAFHVVSASDGGITYATAFSAVFTAGVLFIILSLTPLRKQLIEAIPNNLKYGITTGIGLFIAFIGLRQAGIVAADESNLVTLGNLHSPGVILTLVGLLISVVLMVLNVSGALFIGMAATALIAFFTGQLHFSKGFMSLPHLPEGLMISNPFTAFGDVIHHGLYAVVFSFLLVTIFDTTGTMIGVAEQAGLMKNNKLPNVRKALLADSTATTVGAVFGTSPTTAFIESSAGVAAGGRTGLTALTVAVMFAASMFFSPLVSALSGIAAITSPALIIVGSLMMGSVSNMNWKEMDEAFPAFLVILAMPLTSSISTGIALGFISYPIVKAARGKWREIHPLVIVFAILFFIQLFIL.

10 helical membrane-spanning segments follow: residues 15 to 35 (IIAGLTTFFTMVYIVVVNPVI), 51 to 71 (IIASIVGTLWMALAANYPIAI), 92 to 112 (GITYATAFSAVFTAGVLFIIL), 133 to 153 (ITTGIGLFIAFIGLRQAGIVA), 174 to 194 (LVGLLISVVLMVLNVSGALFI), 196 to 216 (MAATALIAFFTGQLHFSKGFM), 234 to 254 (FGDVIHHGLYAVVFSFLLVTI), 340 to 360 (ALSGIAAITSPALIIVGSLMM), 379 to 399 (LVILAMPLTSSISTGIALGFI), and 412 to 432 (REIHPLVIVFAILFFIQLFIL).

It belongs to the nucleobase:cation symporter-2 (NCS2) (TC 2.A.40) family. Azg-like subfamily.

The protein resides in the cell membrane. Its function is as follows. Involved in the uptake of the purine bases hypoxanthine and guanine. May work at purine concentrations higher than 100 uM. In Bacillus subtilis (strain 168), this protein is Guanine/hypoxanthine permease PbuO (pbuO).